The following is a 298-amino-acid chain: Estradiol 17-beta-dehydrogenase 11 (298 aa).

The signal sequence occupies residues 1–21; sequence MKYLLDLILLLPLLIVFCIES. 40 to 64 lines the NADP(+) pocket; the sequence is LITGAGHGIGRLTAYEFAKLNTKLV. Substrate is bound at residue Ser172. The active-site Proton acceptor is Tyr185.

This sequence belongs to the short-chain dehydrogenases/reductases (SDR) family. 17-beta-HSD 3 subfamily.

The protein localises to the endoplasmic reticulum. The protein resides in the lipid droplet. It carries out the reaction 17beta-estradiol + NAD(+) = estrone + NADH + H(+). The catalysed reaction is 17beta-estradiol + NADP(+) = estrone + NADPH + H(+). In terms of biological role, can convert androstan-3-alpha,17-beta-diol (3-alpha-diol) to androsterone in vitro, suggesting that it may participate in androgen metabolism during steroidogenesis. May act by metabolizing compounds that stimulate steroid synthesis and/or by generating metabolites that inhibit it. Has no activity toward DHEA (dehydroepiandrosterone), or A-dione (4-androste-3,17-dione), and only a slight activity toward testosterone to A-dione. In Rattus norvegicus (Rat), this protein is Estradiol 17-beta-dehydrogenase 11 (Hsd17b11).